The chain runs to 335 residues: Ornithine carbamoyltransferase (335 aa).

Carbamoyl phosphate-binding positions include 60–63 (STRT), Gln-87, Arg-111, and 138–141 (HPTQ). Residues Asn-171, Asp-235, and 239–240 (SM) contribute to the L-ornithine site. Carbamoyl phosphate contacts are provided by residues 277–278 (CL) and Arg-322.

It belongs to the aspartate/ornithine carbamoyltransferase superfamily. OTCase family.

It is found in the cytoplasm. It carries out the reaction carbamoyl phosphate + L-ornithine = L-citrulline + phosphate + H(+). Its pathway is amino-acid biosynthesis; L-arginine biosynthesis; L-arginine from L-ornithine and carbamoyl phosphate: step 1/3. In terms of biological role, reversibly catalyzes the transfer of the carbamoyl group from carbamoyl phosphate (CP) to the N(epsilon) atom of ornithine (ORN) to produce L-citrulline. The protein is Ornithine carbamoyltransferase of Streptomyces avermitilis (strain ATCC 31267 / DSM 46492 / JCM 5070 / NBRC 14893 / NCIMB 12804 / NRRL 8165 / MA-4680).